The chain runs to 245 residues: High affinity immunoglobulin epsilon receptor subunit alpha (245 aa).

The first 23 residues, 1 to 23 (MDTGGSARLCLALVLISLGVMLT), serve as a signal peptide directing secretion. Over 24-204 (ATQKSVVSLD…DYTIEYRWLQ (181 aa)) the chain is Extracellular. Ig-like domains lie at 28–103 (SVVS…KPVY) and 113–181 (LQSS…LNKV). The cysteines at positions 49 and 91 are disulfide-linked. Residues asparagine 52, asparagine 53, asparagine 58, asparagine 65, asparagine 123, asparagine 158, and asparagine 167 are each glycosylated (N-linked (GlcNAc...) asparagine). A disulfide bridge connects residues cysteine 130 and cysteine 174. Residues 205-223 (LIFPSLAVILFAVDTGLWF) traverse the membrane as a helical segment. Topologically, residues 224–245 (STHKQFESILKIQKTGKGKKKG) are cytoplasmic.

In terms of assembly, tetramer of an alpha chain, a beta chain, and two disulfide linked gamma chains. Interacts with IGHE (via CH3 region). As to expression, expressed in leukocytes and pinealocytes at night (at protein level).

The protein resides in the cell membrane. It is found in the secreted. High-affinity receptor for immunoglobulin epsilon/IgE. Mediates IgE effector functions in myeloid cells. Upon IgE binding and antigen/allergen cross-linking initiates signaling pathways that lead to myeloid cell activation and differentiation. On mast cells, basophils and eosinophils stimulates the secretion of vasoactive amines, lipid mediators and cytokines that contribute to inflammatory response, tissue remodeling and cytotoxicity against microbes. Triggers the immediate hypersensitivity response to allergens as a host defense mechanism against helminth parasites, pathogenic bacteria and venom toxicity. When dysregulated, it can elicit harmful life-threatening allergic and anaphylactic reactions. In Rattus norvegicus (Rat), this protein is High affinity immunoglobulin epsilon receptor subunit alpha (Fcer1a).